Reading from the N-terminus, the 90-residue chain is Small ribosomal subunit protein bS20 (90 aa).

The protein belongs to the bacterial ribosomal protein bS20 family.

In terms of biological role, binds directly to 16S ribosomal RNA. The protein is Small ribosomal subunit protein bS20 of Rickettsia canadensis (strain McKiel).